The chain runs to 1242 residues: DNA-directed RNA polymerase RPB2 homolog (1242 aa).

The C4-type zinc finger occupies 1180 to 1201 (CRNCGEPAIYNASHPIYKCMNC).

The protein belongs to the RNA polymerase beta chain family. Part of the viral DNA-directed RNA polymerase that consists of 8 polII-like subunits (RPB1, RPB2, RPB3, RPB5, RPB6, RPB7, RPB9, RPB10), a capping enzyme and a termination factor.

Its subcellular location is the host cytoplasm. The protein localises to the virion. The enzyme catalyses RNA(n) + a ribonucleoside 5'-triphosphate = RNA(n+1) + diphosphate. Catalytic component of the DNA-directed RNA polymerase (RNAP) that catalyzes the transcription in the cytoplasm of viral DNA into RNA using the four ribonucleoside triphosphates as substrates. Forms the polymerase active center together with RPB1. Part of the core element with the central large cleft, the clamp element that moves to open and close the cleft and the jaws that are thought to grab the incoming DNA template. This African swine fever virus (isolate Tick/Malawi/Lil 20-1/1983) (ASFV) protein is DNA-directed RNA polymerase RPB2 homolog.